A 579-amino-acid chain; its full sequence is YTH domain-containing family protein 2 (579 aa).

The interval 1–45 (MSASSLLEQRPKGQGNKVQNGSVHQKDGLNDDDFEPYLSPQARPN) is disordered. Serine 2 carries the N-acetylserine modification. Serine 2, serine 4, serine 5, serine 22, serine 39, and serine 196 each carry phosphoserine. A localization to mRNA processing bodies (P-bodies) region spans residues 2–384 (SASSLLEQRP…QAGSGSTPSE (383 aa)). The interval 247 to 387 (AKQQPKLKTK…SGSTPSEPHP (141 aa)) is disordered. Residues 291 to 316 (ALVQNIGQPTQGSPQPVGQQANNSPP) show a composition bias toward polar residues. Over residues 337–349 (AQLSVQQQAAQPT) the composition is skewed to low complexity. At serine 359 the chain carries Phosphoserine. The span at 359–371 (SGFGHNGVDGNGV) shows a compositional bias: gly residues. Residues 372 to 383 (GQSQAGSGSTPS) are compositionally biased toward polar residues. Residues 385–579 (PHPVLEKLRS…VKKERQGRGK (195 aa)) are interaction with m6A-containing mRNAs. At serine 394 the chain carries Phosphoserine. The YTH domain occupies 410 to 544 (GRVFIIKSYS…EKAKQVLKII (135 aa)). RNA-binding positions include 416 to 418 (KSY), aspartate 422, 432 to 433 (WC), asparagine 462, tryptophan 486, and tryptophan 491.

This sequence belongs to the YTHDF family. YTHDF2 subfamily. As to quaternary structure, interacts with CNOT1; interaction is direct and promotes recruitment of the CCR4-NOT complex. Interacts with YTHDF3. Interacts with RIDA/HRSP12; interaction leads to recruitment of the ribonuclease P/MRP complex. In terms of processing, ubiquitinated by the SCF(SKP2) complex, leading to its degradation. Widely expressed, with highest expression in testis.

The protein localises to the cytoplasm. The protein resides in the cytosol. Its subcellular location is the P-body. It is found in the stress granule. It localises to the nucleus. Its function is as follows. Specifically recognizes and binds N6-methyladenosine (m6A)-containing RNAs, and regulates their stability. M6A is a modification present at internal sites of mRNAs and some non-coding RNAs and plays a role in mRNA stability and processing. Acts as a regulator of mRNA stability by promoting degradation of m6A-containing mRNAs via interaction with the CCR4-NOT and ribonuclease P/MRP complexes, depending on the context. The YTHDF paralogs (YTHDF1, YTHDF2 and YTHDF3) share m6A-containing mRNAs targets and act redundantly to mediate mRNA degradation and cellular differentiation. M6A-containing mRNAs containing a binding site for RIDA/HRSP12 (5'-GGUUC-3') are preferentially degraded by endoribonucleolytic cleavage: cooperative binding of RIDA/HRSP12 and YTHDF2 to transcripts leads to recruitment of the ribonuclease P/MRP complex. Other m6A-containing mRNAs undergo deadenylation via direct interaction between YTHDF2 and CNOT1, leading to recruitment of the CCR4-NOT and subsequent deadenylation of m6A-containing mRNAs. Required maternally to regulate oocyte maturation: probably acts by binding to m6A-containing mRNAs, thereby regulating maternal transcript dosage during oocyte maturation, which is essential for the competence of oocytes to sustain early zygotic development. Also required during spermatogenesis: regulates spermagonial adhesion by promoting degradation of m6A-containing transcripts coding for matrix metallopeptidases. Also involved in hematopoietic stem cells specification by binding to m6A-containing mRNAs, leading to promote their degradation. Also acts as a regulator of neural development by promoting m6A-dependent degradation of neural development-related mRNA targets. Inhibits neural specification of induced pluripotent stem cells by binding to methylated neural-specific mRNAs and promoting their degradation, thereby restraining neural differentiation. Regulates circadian regulation of hepatic lipid metabolism: acts by promoting m6A-dependent degradation of PPARA transcripts. Regulates the innate immune response to infection by inhibiting the type I interferon response: acts by binding to m6A-containing IFNB transcripts and promoting their degradation. May also act as a promoter of cap-independent mRNA translation following heat shock stress: upon stress, relocalizes to the nucleus and specifically binds mRNAs with some m6A methylation mark at their 5'-UTR, protecting demethylation of mRNAs by FTO, thereby promoting cap-independent mRNA translation. Regulates mitotic entry by promoting the phase-specific m6A-dependent degradation of WEE1 transcripts. Promotes formation of phase-separated membraneless compartments, such as P-bodies or stress granules, by undergoing liquid-liquid phase separation upon binding to mRNAs containing multiple m6A-modified residues: polymethylated mRNAs act as a multivalent scaffold for the binding of YTHDF proteins, juxtaposing their disordered regions and thereby leading to phase separation. The resulting mRNA-YTHDF complexes then partition into different endogenous phase-separated membraneless compartments, such as P-bodies, stress granules or neuronal RNA granules. May also recognize and bind RNAs modified by C5-methylcytosine (m5C) and act as a regulator of rRNA processing. In Mus musculus (Mouse), this protein is YTH domain-containing family protein 2.